Here is a 106-residue protein sequence, read N- to C-terminus: MHGPRETLQEIVLHLEPQNELDPVDLLCYEQLSESEEENDEADGVSHAQLPARRAEPQRHKILCVCCKCDGRIELTVESSAEDLRTLQQLFLSTLSFVCPWCATNQ.

The tract at residues 1–50 (MHGPRETLQEIVLHLEPQNELDPVDLLCYEQLSESEEENDEADGVSHAQL) is E7 terminal domain. The LXCXE motif; interaction with host RB1 and TMEM173/STING signature appears at 26-30 (LLCYE). Over residues 33–43 (SESEEENDEAD) the composition is skewed to acidic residues. The tract at residues 33–55 (SESEEENDEADGVSHAQLPARRA) is disordered. A zinc finger lies at 66-102 (CCKCDGRIELTVESSAEDLRTLQQLFLSTLSFVCPWC). The Nuclear export signal motif lies at 84-92 (LRTLQQLFL).

This sequence belongs to the papillomaviridae E7 protein family. As to quaternary structure, homodimer. Homooligomer. Interacts with host RB1; this interaction induces dissociation of RB1-E2F1 complex thereby disrupting RB1 activity. Interacts with host EP300; this interaction represses EP300 transcriptional activity. Interacts with protein E2; this interaction inhibits E7 oncogenic activity. Interacts with host TMEM173/STING; this interaction impairs the ability of TMEM173/STING to sense cytosolic DNA and promote the production of type I interferon (IFN-alpha and IFN-beta). In terms of processing, highly phosphorylated.

Its subcellular location is the host cytoplasm. The protein resides in the host nucleus. In terms of biological role, plays a role in viral genome replication by driving entry of quiescent cells into the cell cycle. Stimulation of progression from G1 to S phase allows the virus to efficiently use the cellular DNA replicating machinery to achieve viral genome replication. E7 protein has both transforming and trans-activating activities. Induces the disassembly of the E2F1 transcription factor from RB1, with subsequent transcriptional activation of E2F1-regulated S-phase genes. Interferes with host histone deacetylation mediated by HDAC1 and HDAC2, leading to transcription activation. Also plays a role in the inhibition of both antiviral and antiproliferative functions of host interferon alpha. Interaction with host TMEM173/STING impairs the ability of TMEM173/STING to sense cytosolic DNA and promote the production of type I interferon (IFN-alpha and IFN-beta). The protein is Protein E7 of Human papillomavirus 45.